The primary structure comprises 328 residues: tRNA N6-adenosine threonylcarbamoyltransferase (328 aa).

Positions 111 and 115 each coordinate Fe cation. Substrate is bound by residues leucine 133 to glycine 137, aspartate 166, glycine 179, aspartate 183, and asparagine 270. Aspartate 296 contacts Fe cation.

Belongs to the KAE1 / TsaD family. Requires Fe(2+) as cofactor.

It is found in the cytoplasm. It carries out the reaction L-threonylcarbamoyladenylate + adenosine(37) in tRNA = N(6)-L-threonylcarbamoyladenosine(37) in tRNA + AMP + H(+). Required for the formation of a threonylcarbamoyl group on adenosine at position 37 (t(6)A37) in tRNAs that read codons beginning with adenine. Is involved in the transfer of the threonylcarbamoyl moiety of threonylcarbamoyl-AMP (TC-AMP) to the N6 group of A37, together with TsaE and TsaB. TsaD likely plays a direct catalytic role in this reaction. This is tRNA N6-adenosine threonylcarbamoyltransferase from Phytoplasma australiense.